We begin with the raw amino-acid sequence, 926 residues long: LPS-assembly protein LptD (926 aa).

Residues 1-22 form the signal peptide; that stretch reads MALKSPAFRKKFPLLVTGSLLA. The segment at 58–99 is disordered; sequence VDLPPRPVHDTTSVSSNGTVTSQSTSSGEQVAGTQLVTEAKG. Low complexity predominate over residues 68 to 85; it reads TTSVSSNGTVTSQSTSSG.

This sequence belongs to the LptD family. In terms of assembly, component of the lipopolysaccharide transport and assembly complex. Interacts with LptE and LptA.

The protein localises to the cell outer membrane. In terms of biological role, together with LptE, is involved in the assembly of lipopolysaccharide (LPS) at the surface of the outer membrane. The protein is LPS-assembly protein LptD of Pseudomonas savastanoi pv. phaseolicola (strain 1448A / Race 6) (Pseudomonas syringae pv. phaseolicola (strain 1448A / Race 6)).